The chain runs to 360 residues: sn-glycerol-3-phosphate import ATP-binding protein UgpC (360 aa).

In terms of domain architecture, ABC transporter spans 4 to 235 (LSLKGVKKSY…PATTFVASFI (232 aa)). Residue 37–44 (GPSGCGKS) participates in ATP binding.

This sequence belongs to the ABC transporter superfamily. sn-glycerol-3-phosphate importer (TC 3.A.1.1.3) family. The complex is composed of two ATP-binding proteins (UgpC), two transmembrane proteins (UgpA and UgpE) and a solute-binding protein (UgpB).

The protein resides in the cell inner membrane. It catalyses the reaction sn-glycerol 3-phosphate(out) + ATP + H2O = sn-glycerol 3-phosphate(in) + ADP + phosphate + H(+). Part of the ABC transporter complex UgpBAEC involved in sn-glycerol-3-phosphate (G3P) import. Responsible for energy coupling to the transport system. The protein is sn-glycerol-3-phosphate import ATP-binding protein UgpC of Burkholderia mallei (strain ATCC 23344).